Reading from the N-terminus, the 158-residue chain is Large ribosomal subunit protein uL13 (158 aa).

Belongs to the universal ribosomal protein uL13 family. In terms of assembly, part of the 50S ribosomal subunit.

In terms of biological role, this protein is one of the early assembly proteins of the 50S ribosomal subunit, although it is not seen to bind rRNA by itself. It is important during the early stages of 50S assembly. The polypeptide is Large ribosomal subunit protein uL13 (Rickettsia canadensis (strain McKiel)).